The following is a 303-amino-acid chain: S-methyl-5'-thioadenosine phosphorylase 1 (303 aa).

Residues Ser14, 57 to 58, and 90 to 91 contribute to the phosphate site; these read RH and SA. Met198 serves as a coordination point for substrate. Ser199 is a binding site for phosphate. Residue 222 to 224 participates in substrate binding; the sequence is DYD.

Belongs to the PNP/MTAP phosphorylase family. MTAP subfamily. As to quaternary structure, homotrimer.

The protein localises to the cytoplasm. Its subcellular location is the nucleus. The catalysed reaction is S-methyl-5'-thioadenosine + phosphate = 5-(methylsulfanyl)-alpha-D-ribose 1-phosphate + adenine. It functions in the pathway amino-acid biosynthesis; L-methionine biosynthesis via salvage pathway; S-methyl-5-thio-alpha-D-ribose 1-phosphate from S-methyl-5'-thioadenosine (phosphorylase route): step 1/1. Its function is as follows. Catalyzes the reversible phosphorylation of S-methyl-5'-thioadenosine (MTA) to adenine and 5-methylthioribose-1-phosphate. Involved in the breakdown of MTA, a major by-product of polyamine biosynthesis. Responsible for the first step in the methionine salvage pathway after MTA has been generated from S-adenosylmethionine. Has broad substrate specificity with 6-aminopurine nucleosides as preferred substrates. This Puccinia graminis f. sp. tritici (strain CRL 75-36-700-3 / race SCCL) (Black stem rust fungus) protein is S-methyl-5'-thioadenosine phosphorylase 1.